The primary structure comprises 31 residues: Mu-conotoxin SmIIIA (31 aa).

The propeptide occupies 1–6 (PLFDKR). A Pyrrolidone carboxylic acid modification is found at Q7. Disulfide bonds link C9/C21, C10/C27, and C16/C28. Position 28 is a cysteine amide (C28).

This sequence belongs to the conotoxin M superfamily. SmIIIA' is a putative isoform where the N-terminal AA is missing. In terms of tissue distribution, expressed by the venom duct.

The protein localises to the secreted. Mu-conotoxins block voltage-gated sodium channels (Nav). This toxin blocks rNav1.5/SCN5A (IC(50) is 1.3 uM), rNav1.6/SCN8A (IC(50) is 160 nM), rNav1.7/SCN9A (IC(50) is 1.3 uM), rNav1.1/SCN1A (K(d) is 3.8 nM), rNav1.2/SCN2A (K(d) is 1.3 nM), rNav1.4/SCN4A (K(d) is 0.22 nM), rNav1.6/SCN8A (K(d) is 69 nM), and rNav1.7/SCN9A (K(d) is 260 nM). This toxin is very potent but weakly discriminating among sodium channels. The block of these channels is modified when beta-subunits are coexpressed with alpha subunits. Hence, blocks of channels containing beta-1 and beta-3 subunits are more potent (compared to channels without beta subunits), whereas blocks of channels containing beta-2 and beta-4 subunits are less potent (compared to channels without beta subunits). The chain is Mu-conotoxin SmIIIA from Conus stercusmuscarum (Fly-specked cone).